A 117-amino-acid polypeptide reads, in one-letter code: Gamma-aminobutyric acid receptor-associated protein-like 1 (117 aa).

Residue G116 is the site of Phosphatidylethanolamine amidated glycine; alternate attachment. Residue G116 is the site of Phosphatidylserine amidated glycine; alternate attachment. K117 is a propeptide (removed in mature form).

Belongs to the ATG8 family. Interacts with ATG13, OPRK1, RB1CC1 and ULK1. Interacts with TP53INP1 and TP53INP2. Directly interacts with SQSTM1. Interacts with ATG3, ATG7 and MAP15. Interacts with TECPR2. Interacts with TBC1D5. Interacts with MAPK15. Interacts with TRIM5. Interacts with MEFV and TRIM21. Interacts with WDFY3. Interacts with the reticulophagy receptor TEX264. Interacts with UBA5. Interacts with KBTBD6 and KBTBD7; the interaction is direct. Interacts with reticulophagy regulators RETREG1, RETREG2 and RETREG3. Interacts with IRGM. Interacts with DNM2. Interacts with NCOA4 (via C-terminus). Post-translationally, the precursor molecule is cleaved by ATG4 (ATG4A, ATG4B, ATG4C or ATG4D) to expose the glycine at the C-terminus and form the cytosolic form, GABARAPL1-I. The processed form is then activated by APG7L/ATG7, transferred to ATG3 and conjugated to phosphatidylethanolamine (PE) phospholipid to form the membrane-bound form, GABARAPL1-II. During non-canonical autophagy, the processed form is conjugated to phosphatidylserine (PS) phospholipid. ATG4 proteins also mediate the delipidation of PE-conjugated forms required for GABARAPL1 recycling when autophagosomes fuse with lysosomes. In addition, ATG4B and ATG4D mediate delipidation of ATG8 proteins conjugated to PS during non-canonical autophagy. ATG4B constitutes the major protein for proteolytic activation. ATG4D is the main enzyme for delipidation activity.

It is found in the cytoplasmic vesicle. Its subcellular location is the autophagosome. It localises to the cytoplasmic vesicle membrane. The protein localises to the cytoplasm. The protein resides in the cytoskeleton. It is found in the endoplasmic reticulum. Its subcellular location is the golgi apparatus. Functionally, ubiquitin-like modifier that increases cell-surface expression of kappa-type opioid receptor through facilitating anterograde intracellular trafficking of the receptor. Involved in formation of autophagosomal vacuoles. While LC3s are involved in elongation of the phagophore membrane, the GABARAP/GATE-16 subfamily is essential for a later stage in autophagosome maturation. Through its interaction with the reticulophagy receptor TEX264, participates in the remodeling of subdomains of the endoplasmic reticulum into autophagosomes upon nutrient stress, which then fuse with lysosomes for endoplasmic reticulum turnover. This chain is Gamma-aminobutyric acid receptor-associated protein-like 1, found in Bos taurus (Bovine).